An 82-amino-acid polypeptide reads, in one-letter code: SGHHDETTDEPSESSKPCCDQCSCTKSMPPKCRCSDIRLNSCHSACKSCACTYSIPAKCFCTDINDFCYEPCKSSRDDDWDN.

The disordered stretch occupies residues 1 to 24 (SGHHDETTDEPSESSKPCCDQCSC). 7 disulfide bridges follow: C18–C72, C19–C34, C22–C68, C24–C32, C42–C49, C46–C61, and C51–C59.

Belongs to the Bowman-Birk serine protease inhibitor family.

Trypsin and chymotrypsin are inhibited simultaneously. There are two separate reactive sites for trypsin and chymotrypsin but they do not inhibit simultaneously. This Phaseolus angularis (Azuki bean) protein is Bowman-Birk type proteinase inhibitor.